Reading from the N-terminus, the 265-residue chain is Type II pantothenate kinase (265 aa).

6-13 (DAGGTLIK) lines the ATP pocket. Residue glutamate 70 is the Proton acceptor of the active site. Residues threonine 99, 121–125 (GGMIQ), tyrosine 137, and serine 225 contribute to the ATP site.

The protein belongs to the type II pantothenate kinase family. In terms of assembly, homodimer.

Its subcellular location is the cytoplasm. The enzyme catalyses (R)-pantothenate + ATP = (R)-4'-phosphopantothenate + ADP + H(+). The protein operates within cofactor biosynthesis; coenzyme A biosynthesis; CoA from (R)-pantothenate: step 1/5. Catalyzes the phosphorylation of pantothenate (Pan), the first step in CoA biosynthesis. In Staphylococcus epidermidis (strain ATCC 12228 / FDA PCI 1200), this protein is Type II pantothenate kinase.